The sequence spans 497 residues: Probable sensor kinase SilS (497 aa).

Over 1–15 the chain is Cytoplasmic; the sequence is MHSKPSRLPFSLALR. A helical transmembrane segment spans residues 16-36; sequence LTFFISLSTILAFIAFTWFML. Residues 37 to 186 are Periplasmic-facing; sequence HSVEKHFAEQ…HLHYLDALKK (150 aa). Residues 187–207 form a helical membrane-spanning segment; that stretch reads NLIAIAVVISLLIVLIIRIAV. In terms of domain architecture, HAMP spans 208–261; it reads RQGHLPLRNVSNAIKNITSENLDARLEPTRVPIELEQLVISFNHMIGKIEDVFT. The Cytoplasmic segment spans residues 208–497; the sequence is RQGHLPLRNV…KMIPDTQCWE (290 aa). The Histidine kinase domain maps to 269–487; sequence DIAHEIRTPI…RFILSVPRLE (219 aa). His272 bears the Phosphohistidine; by autocatalysis mark.

The protein localises to the cell inner membrane. The catalysed reaction is ATP + protein L-histidine = ADP + protein N-phospho-L-histidine.. Its function is as follows. Component of the sil cation-efflux system that confers resistance to silver. Probable member of a two-component regulatory system SilS/SilR. May activate SilR by phosphorylation. In Salmonella typhimurium, this protein is Probable sensor kinase SilS (silS).